A 134-amino-acid chain; its full sequence is Arginine decarboxylase proenzyme (134 aa).

Serine 82 functions as the Schiff-base intermediate with substrate; via pyruvic acid in the catalytic mechanism. At serine 82 the chain carries Pyruvic acid (Ser); by autocatalysis. Histidine 87 functions as the Proton acceptor; for processing activity in the catalytic mechanism. Cysteine 102 (proton donor; for catalytic activity) is an active-site residue.

The protein belongs to the prokaryotic AdoMetDC family. Type 1 subfamily. Heterooctamer of four alpha and four beta chains arranged as a tetramer of alpha/beta heterodimers. It depends on pyruvate as a cofactor. In terms of processing, is synthesized initially as an inactive proenzyme. Formation of the active enzyme involves a self-maturation process in which the active site pyruvoyl group is generated from an internal serine residue via an autocatalytic post-translational modification. Two non-identical subunits are generated from the proenzyme in this reaction, and the pyruvate is formed at the N-terminus of the alpha chain, which is derived from the carboxyl end of the proenzyme. The post-translation cleavage follows an unusual pathway, termed non-hydrolytic serinolysis, in which the side chain hydroxyl group of the serine supplies its oxygen atom to form the C-terminus of the beta chain, while the remainder of the serine residue undergoes an oxidative deamination to produce ammonia and the pyruvoyl group blocking the N-terminus of the alpha chain.

The enzyme catalyses L-arginine + H(+) = agmatine + CO2. It participates in amine and polyamine biosynthesis; agmatine biosynthesis; agmatine from L-arginine: step 1/1. With respect to regulation, highly competitively inhibited by L-argininamide and L-arginine methyl ester. Also inhibited by alpha-difluoromethylarginine. Is not stimulated by potassium chloride as observed for other decarboxylases. In terms of biological role, specifically catalyzes the decarboxylation of L-arginine to agmatine. Is also able to decarboxylate L-canavanine, although less efficiently. Has no S-adenosylmethionine decarboxylase (AdoMetDC) activity. This is Arginine decarboxylase proenzyme from Saccharolobus solfataricus (strain ATCC 35092 / DSM 1617 / JCM 11322 / P2) (Sulfolobus solfataricus).